Reading from the N-terminus, the 148-residue chain is Large ribosomal subunit protein bL9 (148 aa).

It belongs to the bacterial ribosomal protein bL9 family.

In terms of biological role, binds to the 23S rRNA. The sequence is that of Large ribosomal subunit protein bL9 from Chloroflexus aurantiacus (strain ATCC 29366 / DSM 635 / J-10-fl).